Here is a 257-residue protein sequence, read N- to C-terminus: UPF0246 protein Rpic_2164 (257 aa).

It belongs to the UPF0246 family.

This Ralstonia pickettii (strain 12J) protein is UPF0246 protein Rpic_2164.